Reading from the N-terminus, the 957-residue chain is MTQTLSQLEHDGAFIERHIGPSVSQQQHMLSVVGATSLDALIRQIVPADIQLPSPPAVGEAVTEHEALAELKAIAGRNQRYKSYIGMGYSAVLMPPVILRNVLENPGWYTAYTPYQPEVSQGRLEALLNFQQVTQDLTGLDLASASLLDEATAAAEAMAMAKRISKLKQAERFFVADDVHPQTLDVVRTRAETFGFEIVVGKAEEALKDDAVFGVLLQQAGTTGELHDYSDLMAALKARKVVSCVASDIMALVLLTAPGKQGADIVFGSAQRFGVPMGYGGPHAAFFACRDEHKRAMPGRIIGVSRDAAGNTAFRMAMQTREQHIRREKANSNICTSQVLLANIAGMYAVFHGPEGLKRIAGRIHRLTDILAAGLTQGGLLLRHRSWFDTLTIEVADKDVVLSRALSFGINLRSDLASAVGITLDEATTREDVLALFAVLLGDDHGLDIEALDASIAQEVATIPAGLLRHDAILSHPVFNRYHSETEMMRYLHRLARKDLALNQAMIPLGSCTMKLNAAAEMLPITWPEFAELHPFCPPEQALGYRQMIEQLSGWLVQLTGYDAVCMQPNSGAQGEYAGLLAIRRYHESRNEAGRHLCLIPSSAHGTNPASAQMAGMEVVVVACDKQGNIDLHDLREKAQAAGEQLSCIMVTYPSTHGVYEETIREVCQIVHQYGGQVYLDGANMNAQVGITTPGYIGADVSHLNLHKTFCIPHGGGGPGMGPIGVKAHLAPFVPGHQVVKIDGVLTEQGAVSAAPFGSASILPISWMYIRMMGAEGLKQASQMAILNANYIATRLQQAYPVLYTGRDGRVAHECILDIRPLKESTGISEMDIAKRLIDYGFHAPTMSFPVAGTLMVEPTESESQVEIDRFIDAMLAIRSEINRVAQGEWPLDDNPLVNAPHTQAELVADWAHPYSRELAVFPAGSEHKYWPSVKRLDDVYGDRNLFCSCVPMSDYA.

An N6-(pyridoxal phosphate)lysine modification is found at K708.

The protein belongs to the GcvP family. As to quaternary structure, the glycine cleavage system is composed of four proteins: P, T, L and H. Pyridoxal 5'-phosphate serves as cofactor.

The enzyme catalyses N(6)-[(R)-lipoyl]-L-lysyl-[glycine-cleavage complex H protein] + glycine + H(+) = N(6)-[(R)-S(8)-aminomethyldihydrolipoyl]-L-lysyl-[glycine-cleavage complex H protein] + CO2. Functionally, the glycine cleavage system catalyzes the degradation of glycine. The P protein binds the alpha-amino group of glycine through its pyridoxal phosphate cofactor; CO(2) is released and the remaining methylamine moiety is then transferred to the lipoamide cofactor of the H protein. The sequence is that of Glycine dehydrogenase (decarboxylating) from Pectobacterium atrosepticum (strain SCRI 1043 / ATCC BAA-672) (Erwinia carotovora subsp. atroseptica).